The primary structure comprises 101 residues: Large ribosomal subunit protein eL30 (101 aa).

The protein belongs to the eukaryotic ribosomal protein eL30 family.

The sequence is that of Large ribosomal subunit protein eL30 from Pyrobaculum calidifontis (strain DSM 21063 / JCM 11548 / VA1).